A 131-amino-acid chain; its full sequence is Arsenate reductase 2 (131 aa).

Residues Cys-10, Cys-82, and Cys-89 each act as nucleophile in the active site. 2 cysteine pairs are disulfide-bonded: Cys-10–Cys-82 and Cys-82–Cys-89.

The protein belongs to the low molecular weight phosphotyrosine protein phosphatase family. Thioredoxin-coupled ArsC subfamily.

It localises to the cytoplasm. The enzyme catalyses arsenate + [thioredoxin]-dithiol + H(+) = arsenite + [thioredoxin]-disulfide + H2O. Catalyzes the reduction of arsenate [As(V)] to arsenite [As(III)]. This is Arsenate reductase 2 from Staphylococcus epidermidis (strain ATCC 35984 / DSM 28319 / BCRC 17069 / CCUG 31568 / BM 3577 / RP62A).